A 63-amino-acid chain; its full sequence is Large ribosomal subunit protein uL29 (63 aa).

It belongs to the universal ribosomal protein uL29 family.

The polypeptide is Large ribosomal subunit protein uL29 (Shewanella frigidimarina (strain NCIMB 400)).